The sequence spans 335 residues: UPF0353 protein BCG_1543 (335 aa).

A run of 2 helical transmembrane segments spans residues 18 to 38 (WFFL…LMQL) and 67 to 87 (VPAI…AGPT). In terms of domain architecture, VWFA spans 98–294 (VVMLVIDVSQ…AELRAVYSSL (197 aa)). A helical membrane pass occupies residues 309–329 (VGWLRLGALALALAALAALLI).

This sequence belongs to the UPF0353 family.

The protein resides in the cell membrane. This is UPF0353 protein BCG_1543 from Mycobacterium bovis (strain BCG / Pasteur 1173P2).